A 206-amino-acid chain; its full sequence is Probable nicotinate-nucleotide adenylyltransferase (206 aa).

It belongs to the NadD family.

The catalysed reaction is nicotinate beta-D-ribonucleotide + ATP + H(+) = deamido-NAD(+) + diphosphate. It functions in the pathway cofactor biosynthesis; NAD(+) biosynthesis; deamido-NAD(+) from nicotinate D-ribonucleotide: step 1/1. Catalyzes the reversible adenylation of nicotinate mononucleotide (NaMN) to nicotinic acid adenine dinucleotide (NaAD). The polypeptide is Probable nicotinate-nucleotide adenylyltransferase (Paenarthrobacter aurescens (strain TC1)).